We begin with the raw amino-acid sequence, 936 residues long: Coiled-coil domain-containing protein 191 (936 aa).

2 coiled-coil regions span residues 189–270 (RLTM…VKAA) and 364–440 (RDYT…LQAA). The tract at residues 495–541 (LGRTTTGNLQGSLQNVSLSAPGNKQHKTLGAEPSQQPGSNETLRTTS) is disordered. 2 stretches are compositionally biased toward polar residues: residues 497–516 (RTTT…SAPG) and 527–541 (PSQQ…RTTS). Residues 554–592 (NRHVFQQQLIEKQKKKLQEQQKTILELKKNLQLAEAQWA) are a coiled coil. Disordered stretches follow at residues 607 to 656 (LSKP…TPHP) and 691 to 714 (KAQE…RKRE). A coiled-coil region spans residues 662-739 (EERAIQRAEC…IKRNQQLEAI (78 aa)).

The sequence is that of Coiled-coil domain-containing protein 191 (CCDC191) from Homo sapiens (Human).